A 177-amino-acid chain; its full sequence is MSRVAKAPVVIPAGVEVKLNGQDISIKGKNGELSRKIHNAVEVKQADNALTFAPREGFVDGWAQAGTTRALLNAMVIGVTEGFTKKLQLVGVGYRAAVKGNMVNLSLGFSHPVEHALPAGITAECPSQTEIVLKGADKQVIGQVAAELRAYRRPEPYKGKGVRYADEVVRTKEAKKK.

It belongs to the universal ribosomal protein uL6 family. As to quaternary structure, part of the 50S ribosomal subunit.

This protein binds to the 23S rRNA, and is important in its secondary structure. It is located near the subunit interface in the base of the L7/L12 stalk, and near the tRNA binding site of the peptidyltransferase center. This Pectobacterium atrosepticum (strain SCRI 1043 / ATCC BAA-672) (Erwinia carotovora subsp. atroseptica) protein is Large ribosomal subunit protein uL6.